Consider the following 575-residue polypeptide: Epsin-1 (575 aa).

The a 1,2-diacyl-sn-glycero-3-phospho-(1D-myo-inositol-4,5-bisphosphate) site is built by Arg-8, Lys-11, Arg-25, Asn-30, Arg-63, and His-73. The ENTH domain maps to Asn-12–Arg-144. The disordered stretch occupies residues Lys-149 to Leu-186. The span at Thr-157 to Ser-167 shows a compositional bias: low complexity. UIM domains follow at residues Glu-183 to Pro-202, Glu-208 to Glu-227, and Gly-233 to Lys-252. Disordered stretches follow at residues Phe-264–Pro-283 and Ser-293–Leu-575. A run of 8 repeats spans residues Asp-274–Trp-276, Asp-294–Trp-296, Asp-306–Trp-308, Asp-319–Trp-321, Asp-332–Trp-334, Asp-349–Trp-351, Asp-367–Trp-369, and Asp-377–Trp-379. The interval Asp-274–Trp-379 is 8 X 3 AA repeats of D-P-W. Residues Asp-306–Ala-316 are compositionally biased toward low complexity. Positions Pro-333–Pro-346 are enriched in low complexity. The span at Asp-367–Trp-379 shows a compositional bias: low complexity. Ser-382 carries the post-translational modification Phosphoserine. Residues Asp-401–Arg-410 carry the [DE]-X(1,2)-F-X-X-[FL]-X-X-X-R motif motif. Phosphoserine is present on residues Ser-418 and Ser-419. The residue at position 420 (Thr-420) is a Phosphothreonine. 3 positions are modified to phosphoserine: Ser-434, Ser-446, and Ser-453. Positions Ser-453 to Arg-467 are enriched in pro residues. A phosphothreonine mark is found at Thr-459, Thr-463, and Thr-469. Ser-472 is modified (phosphoserine). Thr-493 is modified (phosphothreonine). A run of 2 repeats spans residues Asn-501–Phe-503 and Asn-517–Phe-519. Residues Asn-501–Phe-573 form a 3 X 3 AA repeats of N-P-F region. Residue Arg-533 is modified to Omega-N-methylarginine. Positions Gly-556–Asn-569 are enriched in pro residues. The stretch at Asn-571 to Phe-573 is repeat 3.

Belongs to the epsin family. As to quaternary structure, monomer. Binds ITSN1. Binds clathrin, ZBTB16/ZNF145, AP2A1 and AP2A2. Binds ubiquitinated proteins. Interacts with RALBP1 in a complex also containing NUMB and TFAP2A during interphase and mitosis. Interacts with AP2B1. Interacts with UBQLN2. Interacts with REPS2; the interaction is direct. Interacts with EPS15; the interaction is direct. Interacts with ENTREP1. Post-translationally, ubiquitinated. In terms of processing, phosphorylated on serine and/or threonine residues in mitotic cells. Phosphorylation reduces interaction with REPS2, AP-2 and the membrane fraction. Depolarization of synaptosomes results in dephosphorylation. As to expression, ubiquitously expressed. Detected in liver, spleen and testis, and weakly in lung and thymus (at protein level).

It localises to the cytoplasm. Its subcellular location is the cell membrane. It is found in the nucleus. The protein resides in the membrane. The protein localises to the clathrin-coated pit. Functionally, binds to membranes enriched in phosphatidylinositol 4,5-bisphosphate (PtdIns(4,5)P2). Modifies membrane curvature and facilitates the formation of clathrin-coated invaginations. Regulates receptor-mediated endocytosis. The polypeptide is Epsin-1 (Epn1) (Rattus norvegicus (Rat)).